The sequence spans 719 residues: Pesticidal crystal protein Cry1Ia (719 aa).

This sequence belongs to the delta endotoxin family.

Functionally, promotes colloidosmotic lysis by binding to the midgut epithelial cells of certain coleopteran and lepidopteran species. Active on Plutella xylostella and Bombyx mori. The protein is Pesticidal crystal protein Cry1Ia (cry1Ia) of Bacillus thuringiensis subsp. kurstaki.